Here is a 245-residue protein sequence, read N- to C-terminus: Orotidine 5'-phosphate decarboxylase (245 aa).

Residues D22, K44, 71–80 (DLKFHDIPNT), T131, R192, Q201, G221, and R222 contribute to the substrate site. The active-site Proton donor is K73.

Belongs to the OMP decarboxylase family. Type 1 subfamily. In terms of assembly, homodimer.

It catalyses the reaction orotidine 5'-phosphate + H(+) = UMP + CO2. The protein operates within pyrimidine metabolism; UMP biosynthesis via de novo pathway; UMP from orotate: step 2/2. Functionally, catalyzes the decarboxylation of orotidine 5'-monophosphate (OMP) to uridine 5'-monophosphate (UMP). This chain is Orotidine 5'-phosphate decarboxylase, found in Salmonella paratyphi A (strain ATCC 9150 / SARB42).